Consider the following 304-residue polypeptide: Non-specific ribonucleoside hydrolase RihC (304 aa).

Residue His233 is part of the active site.

The protein belongs to the IUNH family. RihC subfamily.

Hydrolyzes both purine and pyrimidine ribonucleosides with a broad-substrate specificity. The polypeptide is Non-specific ribonucleoside hydrolase RihC (Escherichia coli O157:H7).